The sequence spans 184 residues: Photosystem I assembly protein Ycf4 (184 aa).

2 consecutive transmembrane segments (helical) span residues 21–43 and 63–85; these read NYFW…VSSY and GIVM…FTIF.

Belongs to the Ycf4 family.

The protein localises to the plastid. The protein resides in the chloroplast thylakoid membrane. Functionally, seems to be required for the assembly of the photosystem I complex. The sequence is that of Photosystem I assembly protein Ycf4 from Chaetosphaeridium globosum (Charophycean green alga).